The following is a 380-amino-acid chain: Alpha-glucoside transport system permease protein AglG (380 aa).

The next 6 helical transmembrane spans lie at 13 to 33 (VHLS…GLLI), 179 to 199 (VIPI…PFPG), 202 to 222 (VLLA…LIPL), 239 to 259 (TYMG…IYLL), 288 to 308 (IILP…FLWT), and 344 to 364 (EILT…FFAL). The ABC transmembrane type-1 domain occupies 167 to 364 (FLNSLTVAVP…VVPLIVFFAL (198 aa)).

Belongs to the binding-protein-dependent transport system permease family. MalFG subfamily.

The protein resides in the cell inner membrane. Its function is as follows. Part of the binding-protein-dependent transport system for alpha-glucosides such as sucrose, maltose and trehalose. Probably responsible for the translocation of the substrate across the membrane. The polypeptide is Alpha-glucoside transport system permease protein AglG (aglG) (Rhizobium meliloti (strain 1021) (Ensifer meliloti)).